Here is a 195-residue protein sequence, read N- to C-terminus: Imidazoleglycerol-phosphate dehydratase (195 aa).

It belongs to the imidazoleglycerol-phosphate dehydratase family.

Its subcellular location is the cytoplasm. It carries out the reaction D-erythro-1-(imidazol-4-yl)glycerol 3-phosphate = 3-(imidazol-4-yl)-2-oxopropyl phosphate + H2O. Its pathway is amino-acid biosynthesis; L-histidine biosynthesis; L-histidine from 5-phospho-alpha-D-ribose 1-diphosphate: step 6/9. In Bordetella avium (strain 197N), this protein is Imidazoleglycerol-phosphate dehydratase.